A 60-amino-acid polypeptide reads, in one-letter code: Mannitol-specific phosphotransferase enzyme IIA component (60 aa).

The PTS EIIA type-2 domain maps to 2–60; it reads SELFSNDNIFLNVNVNSQNEAIEKAGKALVDSGAVTDAYIQVVSTFMGNGLAIPHGTDD. His-56 (tele-phosphohistidine intermediate) is an active-site residue. His-56 is subject to Phosphohistidine; by HPr.

As to quaternary structure, homodimer or homotrimer. Seems to be a monomer when not phosphorylated.

The protein resides in the cytoplasm. In terms of biological role, the phosphoenolpyruvate-dependent sugar phosphotransferase system (sugar PTS), a major carbohydrate active transport system, catalyzes the phosphorylation of incoming sugar substrates concomitantly with their translocation across the cell membrane. The enzyme II CmtAB PTS system is involved in D-mannitol transport. The polypeptide is Mannitol-specific phosphotransferase enzyme IIA component (Staphylococcus aureus).